The following is a 455-amino-acid chain: Phosphoglucosamine mutase (455 aa).

The active-site Phosphoserine intermediate is the S104. Mg(2+)-binding residues include S104, D253, D255, and D257. S104 is subject to Phosphoserine.

Belongs to the phosphohexose mutase family. Mg(2+) is required as a cofactor. In terms of processing, activated by phosphorylation.

The catalysed reaction is alpha-D-glucosamine 1-phosphate = D-glucosamine 6-phosphate. Catalyzes the conversion of glucosamine-6-phosphate to glucosamine-1-phosphate. The polypeptide is Phosphoglucosamine mutase (Psychrobacter cryohalolentis (strain ATCC BAA-1226 / DSM 17306 / VKM B-2378 / K5)).